The sequence spans 456 residues: ATP synthase subunit beta 1 (456 aa).

152-159 (GGAGVGKS) provides a ligand contact to ATP.

It belongs to the ATPase alpha/beta chains family. F-type ATPases have 2 components, CF(1) - the catalytic core - and CF(0) - the membrane proton channel. CF(1) has five subunits: alpha(3), beta(3), gamma(1), delta(1), epsilon(1). CF(0) has three main subunits: a(1), b(2) and c(9-12). The alpha and beta chains form an alternating ring which encloses part of the gamma chain. CF(1) is attached to CF(0) by a central stalk formed by the gamma and epsilon chains, while a peripheral stalk is formed by the delta and b chains.

Its subcellular location is the cell membrane. The catalysed reaction is ATP + H2O + 4 H(+)(in) = ADP + phosphate + 5 H(+)(out). Its function is as follows. Produces ATP from ADP in the presence of a proton gradient across the membrane. The catalytic sites are hosted primarily by the beta subunits. The chain is ATP synthase subunit beta 1 from Listeria monocytogenes serotype 4b (strain F2365).